Here is a 213-residue protein sequence, read N- to C-terminus: Sclerostin (213 aa).

The N-terminal stretch at 1–28 is a signal peptide; the sequence is MQLSLAPCLACLLVHAAFVAVESQGWQA. Asparagine 53 carries N-linked (GlcNAc...) asparagine glycosylation. Disulfide bonds link cysteine 80/cysteine 134, cysteine 94/cysteine 148, cysteine 105/cysteine 165, and cysteine 109/cysteine 167. One can recognise a CTCK domain in the interval 82–172; sequence ELHYTRFVTD…ASCKCKRLTR (91 aa). Residue asparagine 175 is glycosylated (N-linked (GlcNAc...) asparagine). The tract at residues 178-213 is disordered; that stretch reads ELKDFGPETARPQKGRKPRPRARGAKANQAELENAY. Residues 190–201 are compositionally biased toward basic residues; it reads QKGRKPRPRARG.

Belongs to the sclerostin family. In terms of assembly, interacts with LRP4 (via the extracellular domain); the interaction facilitates the inhibition of Wnt signaling. Interacts with LRP5 (via the first two YWTD-EGF repeat domains); the interaction inhibits Wnt-mediated signaling. Interacts with LRP6.

It is found in the secreted. Functionally, negative regulator of bone growth that acts through inhibition of Wnt signaling and bone formation. The chain is Sclerostin from Rattus norvegicus (Rat).